The sequence spans 640 residues: RecBCD enzyme subunit RecD (640 aa).

An ATP-binding site is contributed by 194 to 201 (GGPGTGKT).

Belongs to the RecD family. In terms of assembly, heterotrimer of RecB, RecC and RecD. All subunits contribute to DNA-binding.

It catalyses the reaction Couples ATP hydrolysis with the unwinding of duplex DNA at the replication fork by translocating in the 5'-3' direction. This creates two antiparallel DNA single strands (ssDNA). The leading ssDNA polymer is the template for DNA polymerase III holoenzyme which synthesizes a continuous strand.. The catalysed reaction is ATP + H2O = ADP + phosphate + H(+). A helicase/nuclease that prepares dsDNA breaks (DSB) for recombinational DNA repair. Binds to DSBs and unwinds DNA via a highly rapid and processive ATP-dependent bidirectional helicase activity. Unwinds dsDNA until it encounters a Chi (crossover hotspot instigator) sequence from the 3' direction. Cuts ssDNA a few nucleotides 3' to the Chi site. The properties and activities of the enzyme are changed at Chi. The Chi-altered holoenzyme produces a long 3'-ssDNA overhang and facilitates RecA-binding to the ssDNA for homologous DNA recombination and repair. Holoenzyme degrades any linearized DNA that is unable to undergo homologous recombination. In the holoenzyme this subunit has ssDNA-dependent ATPase and 5'-3' helicase activity. When added to pre-assembled RecBC greatly stimulates nuclease activity and augments holoenzyme processivity. Negatively regulates the RecA-loading ability of RecBCD. This Haemophilus influenzae (strain ATCC 51907 / DSM 11121 / KW20 / Rd) protein is RecBCD enzyme subunit RecD.